Consider the following 650-residue polypeptide: Acetyl-coenzyme A synthetase (650 aa).

Residues 191-194 (RGGR), Thr311, and Asn335 contribute to the CoA site. ATP-binding positions include 387-389 (GEP), 411-416 (DTWWQT), Asp500, and Arg515. Ser523 lines the CoA pocket. Arg526 provides a ligand contact to ATP. Positions 537, 539, and 542 each coordinate Mg(2+). Arg584 is a binding site for CoA. N6-acetyllysine is present on Lys609.

The protein belongs to the ATP-dependent AMP-binding enzyme family. Mg(2+) serves as cofactor. In terms of processing, acetylated. Deacetylation by the SIR2-homolog deacetylase activates the enzyme.

The enzyme catalyses acetate + ATP + CoA = acetyl-CoA + AMP + diphosphate. Functionally, catalyzes the conversion of acetate into acetyl-CoA (AcCoA), an essential intermediate at the junction of anabolic and catabolic pathways. AcsA undergoes a two-step reaction. In the first half reaction, AcsA combines acetate with ATP to form acetyl-adenylate (AcAMP) intermediate. In the second half reaction, it can then transfer the acetyl group from AcAMP to the sulfhydryl group of CoA, forming the product AcCoA. This Shewanella amazonensis (strain ATCC BAA-1098 / SB2B) protein is Acetyl-coenzyme A synthetase.